Reading from the N-terminus, the 148-residue chain is Putative fusion protein (148 aa).

The interval 1-34 (MDRALSTFPGDDDETNERNINHREKTSGEHGHYE) is disordered. Residues 16–34 (NERNINHREKTSGEHGHYE) are compositionally biased toward basic and acidic residues.

Belongs to the poxviruses fusion protein family. In terms of assembly, homotrimer, covalently linked.

Its subcellular location is the virion membrane. This is Putative fusion protein from Sheeppox virus (strain KS-1) (SPPV).